Reading from the N-terminus, the 229-residue chain is MSASLNRLERKLGHTFKNQDLMLLALTHRSFASRNNERLEFLGDAILNFVAGEALFERFPQAKEGQLSRLRARLVKGETLALLARGFDLGDHLRLGSGELKSGGFRRESILADALEALIGAIYLDAGLNTVRERVLGWLAGELDSLTLVDTNKDPKTRLQEFLQSRACELPRYEVVDIQGEPHCRTFFVECRVALLNDKTYGQGASRRIAEQVAAAAALVALGVENGND.

The RNase III domain maps to 5-127 (LNRLERKLGH…LIGAIYLDAG (123 aa)). Glutamate 40 serves as a coordination point for Mg(2+). The active site involves aspartate 44. Aspartate 113 and glutamate 116 together coordinate Mg(2+). Residue glutamate 116 is part of the active site. The DRBM domain occupies 154-224 (DPKTRLQEFL…AAAALVALGV (71 aa)).

It belongs to the ribonuclease III family. As to quaternary structure, homodimer. It depends on Mg(2+) as a cofactor.

Its subcellular location is the cytoplasm. It carries out the reaction Endonucleolytic cleavage to 5'-phosphomonoester.. In terms of biological role, digests double-stranded RNA. Involved in the processing of primary rRNA transcript to yield the immediate precursors to the large and small rRNAs (23S and 16S). Processes some mRNAs, and tRNAs when they are encoded in the rRNA operon. Processes pre-crRNA and tracrRNA of type II CRISPR loci if present in the organism. The protein is Ribonuclease 3 of Azotobacter vinelandii (strain DJ / ATCC BAA-1303).